A 500-amino-acid polypeptide reads, in one-letter code: Cytochrome P450 monooxygenase 103 (500 aa).

2 consecutive transmembrane segments (helical) span residues 1 to 21 and 26 to 46; these read MAST…YLLR and PLYA…IGAL. An N-linked (GlcNAc...) asparagine glycan is attached at Asn374. Cys441 is a heme binding site.

It belongs to the cytochrome P450 family. Heme is required as a cofactor.

It localises to the membrane. Its pathway is secondary metabolite biosynthesis. Functionally, cytochrome P450 monooxygenase that is able to use testosterone as a substrate for oxidation. The sequence is that of Cytochrome P450 monooxygenase 103 from Postia placenta (strain ATCC 44394 / Madison 698-R) (Brown rot fungus).